Here is a 312-residue protein sequence, read N- to C-terminus: Homoserine O-acetyltransferase (312 aa).

Residue Cys-142 is the Acyl-thioester intermediate of the active site. Substrate is bound by residues Lys-163 and Ser-194. The active-site Proton acceptor is His-237. Glu-239 is a catalytic residue. Arg-251 serves as a coordination point for substrate.

This sequence belongs to the MetA family.

Its subcellular location is the cytoplasm. It carries out the reaction L-homoserine + acetyl-CoA = O-acetyl-L-homoserine + CoA. The protein operates within amino-acid biosynthesis; L-methionine biosynthesis via de novo pathway; O-acetyl-L-homoserine from L-homoserine: step 1/1. In terms of biological role, transfers an acetyl group from acetyl-CoA to L-homoserine, forming acetyl-L-homoserine. The protein is Homoserine O-acetyltransferase of Catenibacterium mitsuokai (strain DSM 15897 / JCM 10609 / CCUG 48821 A / CIP 106738 / RCA14-39).